The chain runs to 232 residues: Protein fmp52-1, mitochondrial (232 aa).

Residues 1-36 (MASVALIGCTGMVGSHILTSLLAHPSVARVDTISRR) constitute a mitochondrion transit peptide.

It belongs to the FMP52 family.

It is found in the mitochondrion outer membrane. The chain is Protein fmp52-1, mitochondrial (fmp521) from Aspergillus terreus (strain NIH 2624 / FGSC A1156).